A 95-amino-acid polypeptide reads, in one-letter code: Aspartyl/glutamyl-tRNA(Asn/Gln) amidotransferase subunit C (95 aa).

The protein belongs to the GatC family. In terms of assembly, heterotrimer of A, B and C subunits.

It carries out the reaction L-glutamyl-tRNA(Gln) + L-glutamine + ATP + H2O = L-glutaminyl-tRNA(Gln) + L-glutamate + ADP + phosphate + H(+). The enzyme catalyses L-aspartyl-tRNA(Asn) + L-glutamine + ATP + H2O = L-asparaginyl-tRNA(Asn) + L-glutamate + ADP + phosphate + 2 H(+). Functionally, allows the formation of correctly charged Asn-tRNA(Asn) or Gln-tRNA(Gln) through the transamidation of misacylated Asp-tRNA(Asn) or Glu-tRNA(Gln) in organisms which lack either or both of asparaginyl-tRNA or glutaminyl-tRNA synthetases. The reaction takes place in the presence of glutamine and ATP through an activated phospho-Asp-tRNA(Asn) or phospho-Glu-tRNA(Gln). The chain is Aspartyl/glutamyl-tRNA(Asn/Gln) amidotransferase subunit C from Trichlorobacter lovleyi (strain ATCC BAA-1151 / DSM 17278 / SZ) (Geobacter lovleyi).